The sequence spans 687 residues: uncharacterized protein (687 aa).

The next 14 helical transmembrane spans lie at 28-48 (IIFT…TIVV), 66-86 (WAVT…GKLG), 94-114 (VLLG…LSQT), 126-146 (GVGA…VVPL), 154-174 (GVLG…GGWL), 182-202 (WAFW…ATAV), 211-231 (PVID…LIMA), 243-263 (SATI…FVWL), 287-307 (VLSF…PIYL), 320-340 (LRTL…GVLV), 348-368 (IFPV…SQMD), 378-398 (LYLV…VLIV), 414-434 (VTFF…ALFV), and 480-500 (LTQV…LALL).

This sequence belongs to the major facilitator superfamily. TCR/Tet family.

The protein localises to the cell membrane. This is an uncharacterized protein from Mycobacterium tuberculosis (strain CDC 1551 / Oshkosh).